Here is a 230-residue protein sequence, read N- to C-terminus: Acetyltransferase (230 aa).

The 88-residue stretch at 143 to 230 (RYLDGKVICD…RVAVYKARQT (88 aa)) folds into the N-acetyltransferase domain.

Its pathway is mycotoxin biosynthesis. Functionally, acetyltransferase; part of the satratoxin SC3 cluster involved in the biosynthesis of satratoxins, trichothecene mycotoxins that are associated with human food poisonings. Satratoxins are suggested to be made by products of multiple gene clusters (SC1, SC2 and SC3) that encode 21 proteins in all, including polyketide synthases, acetyltransferases, and other enzymes expected to modify the trichothecene skeleton. SC1 encodes 10 proteins, SAT1 to SAT10. The largest are SAT8, which encodes a putative polyketide synthase (PKS) with a conventional non-reducing architecture, and SAT10, a putative protein containing four ankyrin repeats and thus may be involved in protein scaffolding. The putative short-chain reductase SAT3 may assist the PKS in some capacity. SAT6 contains a secretory lipase domain and acts probably as a trichothecene esterase. SAT5 encodes a putative acetyltransferase, and so, with SAT6, may affect endogenous protection from toxicity. The probable transcription factor SAT9 may regulate the expression of the SC1 cluster. SC2 encodes proteins SAT11 to SAT16, the largest of which encodes the putative reducing PKS SAT13. SAT11 is a cytochrome P450 monooxygenase, while SAT14 and SAT16 are probable acetyltransferases. The SC2 cluster may be regulated by the transcription factor SAT15. SC3 is a small cluster that encodes 5 proteins, SAT17 to SAT21. SAT21 is a putative MFS-type transporter which may have a role in exporting secondary metabolites. The four other proteins putatively encoded in SC3 include the taurine hydroxylase-like protein SAT17, the O-methyltransferase SAT18, the acetyltransferase SAT19, and the Cys6-type zinc finger SAT20, the latter being probably involved in regulation of SC3 expression. This is Acetyltransferase from Stachybotrys chartarum (strain CBS 109288 / IBT 7711) (Toxic black mold).